A 269-amino-acid chain; its full sequence is 4-hydroxy-tetrahydrodipicolinate reductase (269 aa).

Residues 8–13 and E34 each bind NAD(+); that span reads GAAGRM. Residue R35 participates in NADP(+) binding. Residues 98–100 and 122–125 each bind NAD(+); these read GTT and APNY. H155 (proton donor/acceptor) is an active-site residue. H156 provides a ligand contact to (S)-2,3,4,5-tetrahydrodipicolinate. The active-site Proton donor is the K159. 165 to 166 contacts (S)-2,3,4,5-tetrahydrodipicolinate; the sequence is GT.

It belongs to the DapB family.

It is found in the cytoplasm. The catalysed reaction is (S)-2,3,4,5-tetrahydrodipicolinate + NAD(+) + H2O = (2S,4S)-4-hydroxy-2,3,4,5-tetrahydrodipicolinate + NADH + H(+). It carries out the reaction (S)-2,3,4,5-tetrahydrodipicolinate + NADP(+) + H2O = (2S,4S)-4-hydroxy-2,3,4,5-tetrahydrodipicolinate + NADPH + H(+). Its pathway is amino-acid biosynthesis; L-lysine biosynthesis via DAP pathway; (S)-tetrahydrodipicolinate from L-aspartate: step 4/4. Functionally, catalyzes the conversion of 4-hydroxy-tetrahydrodipicolinate (HTPA) to tetrahydrodipicolinate. This chain is 4-hydroxy-tetrahydrodipicolinate reductase, found in Vibrio vulnificus (strain CMCP6).